The sequence spans 90 residues: U7-theraphotoxin-Hhn1b (90 aa).

The N-terminal stretch at 1 to 19 (MKTAIFTVVLALAVFAVLS) is a signal peptide. Residues 20–50 (FGWEANEKALSEEFTELIHEKEAASETEARE) constitute a propeptide that is removed on maturation. 3 cysteine pairs are disulfide-bonded: C51/C65, C58/C70, and C64/C81.

Belongs to the neurotoxin 10 (Hwtx-1) family. 13 (Hntx-13) subfamily. In terms of tissue distribution, expressed by the venom gland.

The protein resides in the secreted. In terms of biological role, ion channel inhibitor. This chain is U7-theraphotoxin-Hhn1b, found in Cyriopagopus hainanus (Chinese bird spider).